The primary structure comprises 182 residues: Isopentenyl-diphosphate Delta-isomerase (182 aa).

Mn(2+) is bound by residues His25 and His32. Residues 30-164 (LLHLAFSSWL…PWAFSPWMVM (135 aa)) form the Nudix hydrolase domain. Cys67 is an active-site residue. Mn(2+) is bound at residue His69. Residue Glu87 participates in Mg(2+) binding. Mn(2+) contacts are provided by Glu114 and Glu116. Glu116 is a catalytic residue.

This sequence belongs to the IPP isomerase type 1 family. Homodimer. Requires Mg(2+) as cofactor. The cofactor is Mn(2+).

Its subcellular location is the cytoplasm. The catalysed reaction is isopentenyl diphosphate = dimethylallyl diphosphate. The protein operates within isoprenoid biosynthesis; dimethylallyl diphosphate biosynthesis; dimethylallyl diphosphate from isopentenyl diphosphate: step 1/1. Its function is as follows. Catalyzes the 1,3-allylic rearrangement of the homoallylic substrate isopentenyl (IPP) to its highly electrophilic allylic isomer, dimethylallyl diphosphate (DMAPP). In Escherichia coli O17:K52:H18 (strain UMN026 / ExPEC), this protein is Isopentenyl-diphosphate Delta-isomerase.